The sequence spans 262 residues: Type II restriction enzyme HinfI (262 aa).

The catalysed reaction is Endonucleolytic cleavage of DNA to give specific double-stranded fragments with terminal 5'-phosphates.. Functionally, a P subtype restriction enzyme that recognizes the double-stranded sequence 5'-GANTC-3' and cleaves after G-1. The sequence is that of Type II restriction enzyme HinfI (hinfIR) from Haemophilus influenzae.